Consider the following 353-residue polypeptide: Phospho-furanose lactonase (353 aa).

5 residues coordinate Zn(2+): H25, H27, K153, H186, and H214. Residue K153 is modified to N6-carboxylysine. 244–245 (KY) is a binding site for substrate. D272 provides a ligand contact to Zn(2+). Residue 275 to 278 (RILY) coordinates substrate.

The protein belongs to the metallo-dependent hydrolases superfamily. Phosphotriesterase family. The cofactor is Zn(2+).

It carries out the reaction a 1,4-lactone + H2O = a 4-hydroxyacid + H(+). The enzyme catalyses D-xylono-1,4-lactone 5-phosphate + H2O = 5-phospho-D-xylonate + H(+). The catalysed reaction is L-arabino-1,4-lactone 5-phosphate + H2O = 5-phospho-L-arabinonate + H(+). Catalyzes the hydrolysis of D-xylono-1,4-lactone-5-phosphate and L-arabino-1,4-lactone-5-phosphate. Also able to hydrolyze carboxy 1,4-lactones. The polypeptide is Phospho-furanose lactonase (Mycoplasmopsis agalactiae (strain NCTC 10123 / CIP 59.7 / PG2) (Mycoplasma agalactiae)).